A 359-amino-acid polypeptide reads, in one-letter code: Probable D-xylulose reductase A (359 aa).

C47, H72, and E73 together coordinate Zn(2+). An NAD(+)-binding site is contributed by 182–187 (GAGPVG).

Belongs to the zinc-containing alcohol dehydrogenase family. It depends on Zn(2+) as a cofactor.

It carries out the reaction xylitol + NAD(+) = D-xylulose + NADH + H(+). Its pathway is carbohydrate degradation; L-arabinose degradation via L-arabinitol; D-xylulose 5-phosphate from L-arabinose (fungal route): step 4/5. In terms of biological role, xylitol dehydrogenase which catalyzes the conversion of xylitol to D-xylulose. Xylose is a major component of hemicelluloses such as xylan. Most fungi utilize D-xylose via three enzymatic reactions, xylose reductase (XR), xylitol dehydrogenase (XDH), and xylulokinase, to form xylulose 5-phosphate, which enters pentose phosphate pathway. The sequence is that of Probable D-xylulose reductase A (xdhA) from Emericella nidulans (strain FGSC A4 / ATCC 38163 / CBS 112.46 / NRRL 194 / M139) (Aspergillus nidulans).